A 212-amino-acid polypeptide reads, in one-letter code: Negative modulator of initiation of replication (212 aa).

Interaction with DNA regions lie at residues alanine 113–valine 114 and arginine 144–tyrosine 148.

It belongs to the SeqA family. As to quaternary structure, homodimer. Polymerizes to form helical filaments.

It is found in the cytoplasm. Its function is as follows. Negative regulator of replication initiation, which contributes to regulation of DNA replication and ensures that replication initiation occurs exactly once per chromosome per cell cycle. Binds to pairs of hemimethylated GATC sequences in the oriC region, thus preventing assembly of replication proteins and re-initiation at newly replicated origins. Repression is relieved when the region becomes fully methylated. In Actinobacillus succinogenes (strain ATCC 55618 / DSM 22257 / CCUG 43843 / 130Z), this protein is Negative modulator of initiation of replication.